A 268-amino-acid polypeptide reads, in one-letter code: Shikimate dehydrogenase (NADP(+)) (268 aa).

Shikimate is bound by residues 13–15 (SLS) and Thr60. Residue Lys64 is the Proton acceptor of the active site. Glu76 provides a ligand contact to NADP(+). Positions 85 and 100 each coordinate shikimate. NADP(+) is bound by residues 124 to 128 (GAGGA), 148 to 153 (NRTMAR), and Ile209. Residue Tyr211 coordinates shikimate. An NADP(+)-binding site is contributed by Gly232.

The protein belongs to the shikimate dehydrogenase family. Homodimer.

It catalyses the reaction shikimate + NADP(+) = 3-dehydroshikimate + NADPH + H(+). It participates in metabolic intermediate biosynthesis; chorismate biosynthesis; chorismate from D-erythrose 4-phosphate and phosphoenolpyruvate: step 4/7. In terms of biological role, involved in the biosynthesis of the chorismate, which leads to the biosynthesis of aromatic amino acids. Catalyzes the reversible NADPH linked reduction of 3-dehydroshikimate (DHSA) to yield shikimate (SA). The polypeptide is Shikimate dehydrogenase (NADP(+)) (Staphylococcus aureus (strain USA300)).